The primary structure comprises 370 residues: Mitochondrial carrier protein SCaMC-3L (370 aa).

Solcar repeat units lie at residues 90 to 176 (EALW…CKNY), 184 to 269 (PPFQ…LQCF), and 280 to 367 (PSGL…MKKT). Helical transmembrane passes span 96–113 (LLSG…TAPL), 151–170 (GNGI…FSVF), 194–207 (SLAV…INPM), 245–263 (YLPN…LAVY), 282–306 (GLVS…LTLV), and 342–361 (GMTP…YVVY).

It belongs to the mitochondrial carrier (TC 2.A.29) family.

Its subcellular location is the mitochondrion inner membrane. It carries out the reaction Mg(2+)(out) + phosphate(in) + ATP(out) = Mg(2+)(in) + phosphate(out) + ATP(in). It catalyses the reaction ADP(out) + phosphate(in) + H(+)(out) = ADP(in) + phosphate(out) + H(+)(in). In terms of biological role, calcium-independent ATP-Mg/Pi exchanger that catalyzes the electroneutral exchange of Mg-ATP or free ADP against an hydrogenphosphate and participates in the net transport of adenine nucleotides across the mitochondria inner membrane. This chain is Mitochondrial carrier protein SCaMC-3L, found in Homo sapiens (Human).